A 77-amino-acid chain; its full sequence is DNA-directed RNA polymerase subunit omega (77 aa).

This sequence belongs to the RNA polymerase subunit omega family. As to quaternary structure, the RNAP catalytic core consists of 2 alpha, 1 beta, 1 beta' and 1 omega subunit. When a sigma factor is associated with the core the holoenzyme is formed, which can initiate transcription.

The catalysed reaction is RNA(n) + a ribonucleoside 5'-triphosphate = RNA(n+1) + diphosphate. In terms of biological role, promotes RNA polymerase assembly. Latches the N- and C-terminal regions of the beta' subunit thereby facilitating its interaction with the beta and alpha subunits. The protein is DNA-directed RNA polymerase subunit omega of Dichelobacter nodosus (strain VCS1703A).